The following is a 418-amino-acid chain: UDP-N-acetylglucosamine 1-carboxyvinyltransferase (418 aa).

22-23 (KN) is a binding site for phosphoenolpyruvate. Residue arginine 92 coordinates UDP-N-acetyl-alpha-D-glucosamine. The Proton donor role is filled by cysteine 116. Cysteine 116 is subject to 2-(S-cysteinyl)pyruvic acid O-phosphothioketal. UDP-N-acetyl-alpha-D-glucosamine is bound by residues 121–125 (RPIDL), aspartate 305, and leucine 327.

It belongs to the EPSP synthase family. MurA subfamily.

It localises to the cytoplasm. The catalysed reaction is phosphoenolpyruvate + UDP-N-acetyl-alpha-D-glucosamine = UDP-N-acetyl-3-O-(1-carboxyvinyl)-alpha-D-glucosamine + phosphate. It participates in cell wall biogenesis; peptidoglycan biosynthesis. Cell wall formation. Adds enolpyruvyl to UDP-N-acetylglucosamine. The chain is UDP-N-acetylglucosamine 1-carboxyvinyltransferase from Campylobacter jejuni subsp. doylei (strain ATCC BAA-1458 / RM4099 / 269.97).